An 837-amino-acid polypeptide reads, in one-letter code: A disintegrin and metalloproteinase with thrombospondin motifs 4 (837 aa).

A signal peptide spans 1 to 51 (MSQTGSHPGRGLAGRWLWGAQPCLLLPIVPLSWLVWLLLLLLASLLPSARL). Residues 52-212 (ASPLPREEEI…PSPRPRRAKR (161 aa)) constitute a propeptide that is removed on maturation. Residue Asn68 is glycosylated (N-linked (GlcNAc...) asparagine). A Cysteine switch motif is present at residues 192-199 (PMCNVKAP). Cys194 lines the Zn(2+) pocket. Residues 218–428 (RFVETLVVAD…GYGHCLLDKP (211 aa)) form the Peptidase M12B domain. Intrachain disulfides connect Cys293-Cys345, Cys322-Cys327, Cys339-Cys423, Cys377-Cys407, Cys449-Cys472, Cys460-Cys482, Cys467-Cys501, Cys495-Cys506, Cys532-Cys569, Cys536-Cys574, and Cys547-Cys559. Position 361 (His361) interacts with Zn(2+). Glu362 is an active-site residue. His365 and His371 together coordinate Zn(2+). One can recognise a Disintegrin domain in the interval 437-519 (TFPGKDYDAD…DQLQDFNIPQ (83 aa)). In terms of domain architecture, TSP type-1 spans 520-575 (AGGWGPWGPWGDCSRTCGGGVQFSSRDCTRPVPRNGGKYCEGRRTRFRSCNTEDCP). The spacer stretch occupies residues 686-837 (SKQSGSFRKF…LRRRPWAGRK (152 aa)).

As to quaternary structure, interacts with SRPX2. It depends on Zn(2+) as a cofactor. The precursor is cleaved by a furin endopeptidase. In terms of processing, glycosylated. Can be O-fucosylated by POFUT2 on a serine or a threonine residue found within the consensus sequence C1-X(2)-(S/T)-C2-G of the TSP type-1 repeat domains where C1 and C2 are the first and second cysteine residue of the repeat, respectively. Fucosylated repeats can then be further glycosylated by the addition of a beta-1,3-glucose residue by the glucosyltransferase, B3GALTL. Fucosylation mediates the efficient secretion of ADAMTS family members. Can also be C-glycosylated with one or two mannose molecules on tryptophan residues within the consensus sequence W-X-X-W of the TPRs, and N-glycosylated. These other glycosylations can also facilitate secretion. Expressed in brain, lung and heart. Expressed at very low level in placenta and skeletal muscles. Isoform 2: Detected in osteoarthritic synovium.

The protein localises to the secreted. It localises to the extracellular space. Its subcellular location is the extracellular matrix. The catalysed reaction is Glutamyl endopeptidase. Bonds cleaved include 370-Thr-Glu-Gly-Glu-|-Ala-Arg-Gly-Ser-377 in the interglobular domain of mammalian aggrecan.. In terms of biological role, cleaves aggrecan, a cartilage proteoglycan, at the '392-Glu-|-Ala-393' site and may be involved in its turnover. Also cleaves COMP. May play an important role in the destruction of aggrecan in arthritic diseases. Could be a critical factor in the exacerbation of neurodegeneration in Alzheimer disease. The chain is A disintegrin and metalloproteinase with thrombospondin motifs 4 (ADAMTS4) from Homo sapiens (Human).